Consider the following 372-residue polypeptide: Spermidine/putrescine import ATP-binding protein PotA (372 aa).

In terms of domain architecture, ABC transporter spans 13-243 (IKLTGISKSF…PKNLFVARFI (231 aa)). Residue 45-52 (GPSGCGKT) coordinates ATP.

Belongs to the ABC transporter superfamily. Spermidine/putrescine importer (TC 3.A.1.11.1) family. As to quaternary structure, the complex is composed of two ATP-binding proteins (PotA), two transmembrane proteins (PotB and PotC) and a solute-binding protein (PotD).

The protein localises to the cell inner membrane. It carries out the reaction ATP + H2O + polyamine-[polyamine-binding protein]Side 1 = ADP + phosphate + polyamineSide 2 + [polyamine-binding protein]Side 1.. Functionally, part of the ABC transporter complex PotABCD involved in spermidine/putrescine import. Responsible for energy coupling to the transport system. This is Spermidine/putrescine import ATP-binding protein PotA from Aliivibrio fischeri (strain ATCC 700601 / ES114) (Vibrio fischeri).